The primary structure comprises 101 residues: MIGLSHYLTVAAILFTLGVLGIFINRKNIIVILMSVELILLAVNINLVAFSAYLGDIVGQVFALFVLTVAAAEAAIGLAILVVFFRNRGSIAVEDVNMMKG.

3 consecutive transmembrane segments (helical) span residues 4-24, 29-49, and 65-85; these read LSHY…GIFI, IIVI…NLVA, and FVLT…VVFF.

It belongs to the complex I subunit 4L family. In terms of assembly, NDH-1 is composed of 14 different subunits. Subunits NuoA, H, J, K, L, M, N constitute the membrane sector of the complex.

Its subcellular location is the cell inner membrane. It carries out the reaction a quinone + NADH + 5 H(+)(in) = a quinol + NAD(+) + 4 H(+)(out). Its function is as follows. NDH-1 shuttles electrons from NADH, via FMN and iron-sulfur (Fe-S) centers, to quinones in the respiratory chain. The immediate electron acceptor for the enzyme in this species is believed to be ubiquinone. Couples the redox reaction to proton translocation (for every two electrons transferred, four hydrogen ions are translocated across the cytoplasmic membrane), and thus conserves the redox energy in a proton gradient. The polypeptide is NADH-quinone oxidoreductase subunit K (Methylobacterium nodulans (strain LMG 21967 / CNCM I-2342 / ORS 2060)).